The sequence spans 174 residues: Nucleoside-triphosphatase THEP1 (174 aa).

ATP contacts are provided by residues 7–14 (GRPGVGKT) and 94–101 (LIIVDEIG).

The protein belongs to the THEP1 NTPase family.

It catalyses the reaction a ribonucleoside 5'-triphosphate + H2O = a ribonucleoside 5'-diphosphate + phosphate + H(+). In terms of biological role, has nucleotide phosphatase activity towards ATP, GTP, CTP, TTP and UTP. May hydrolyze nucleoside diphosphates with lower efficiency. This is Nucleoside-triphosphatase THEP1 from Thermotoga maritima (strain ATCC 43589 / DSM 3109 / JCM 10099 / NBRC 100826 / MSB8).